The sequence spans 351 residues: Peptidyl-Lys metalloendopeptidase (351 aa).

The first 22 residues, 1–22 (MFSLSSRFFLYSLCLSAVAVSA), serve as a signal peptide directing secretion. A propeptide spanning residues 23-183 (APGLSLSLSG…VARRSNLGKR (161 aa)) is cleaved from the precursor. Intrachain disulfides connect Cys-189–Cys-259 and Cys-261–Cys-281. His-301 contributes to the Zn(2+) binding site. The active site involves Glu-302. Residues His-305 and Asp-314 each contribute to the Zn(2+) site.

Belongs to the peptidase M35 family. The cofactor is Zn(2+).

The protein localises to the secreted. It carries out the reaction Preferential cleavage in proteins: -Xaa-|-Lys- (in which Xaa may be Pro).. Its activity is regulated as follows. Inhibited by chelating agents such as imidazole, alpha,alpha'-bipyridine, and 1,10-phenanthroline. The protein is Peptidyl-Lys metalloendopeptidase (MEP) of Armillaria mellea (Honey mushroom).